The chain runs to 922 residues: DNA gyrase subunit A (922 aa).

A Topo IIA-type catalytic domain is found at 34-534 (LPDVRDGLKP…SSAEINIEDL (501 aa)). The active-site O-(5'-phospho-DNA)-tyrosine intermediate is the Tyr122. Residues 561–567 (QRRGGRG) carry the GyrA-box motif. Disordered regions lie at residues 715–763 (MQPM…VRPM) and 899–922 (IDGE…DPEE). The span at 723–743 (DDVDGDDESVIDAGNDDDGSD) shows a compositional bias: acidic residues.

Belongs to the type II topoisomerase GyrA/ParC subunit family. As to quaternary structure, heterotetramer, composed of two GyrA and two GyrB chains. In the heterotetramer, GyrA contains the active site tyrosine that forms a transient covalent intermediate with DNA, while GyrB binds cofactors and catalyzes ATP hydrolysis.

The protein localises to the cytoplasm. The enzyme catalyses ATP-dependent breakage, passage and rejoining of double-stranded DNA.. Its function is as follows. A type II topoisomerase that negatively supercoils closed circular double-stranded (ds) DNA in an ATP-dependent manner to modulate DNA topology and maintain chromosomes in an underwound state. Negative supercoiling favors strand separation, and DNA replication, transcription, recombination and repair, all of which involve strand separation. Also able to catalyze the interconversion of other topological isomers of dsDNA rings, including catenanes and knotted rings. Type II topoisomerases break and join 2 DNA strands simultaneously in an ATP-dependent manner. This chain is DNA gyrase subunit A, found in Aeromonas salmonicida.